Here is a 485-residue protein sequence, read N- to C-terminus: Protein nucleotidyltransferase YdiU (485 aa).

Gly90, Gly92, Arg93, Lys113, Asp125, Gly126, Arg176, and Arg183 together coordinate ATP. Catalysis depends on Asp252, which acts as the Proton acceptor. Mg(2+)-binding residues include Asn253 and Asp262. An ATP-binding site is contributed by Asp262.

Belongs to the SELO family. Mg(2+) serves as cofactor. Mn(2+) is required as a cofactor.

It catalyses the reaction L-seryl-[protein] + ATP = 3-O-(5'-adenylyl)-L-seryl-[protein] + diphosphate. The enzyme catalyses L-threonyl-[protein] + ATP = 3-O-(5'-adenylyl)-L-threonyl-[protein] + diphosphate. It carries out the reaction L-tyrosyl-[protein] + ATP = O-(5'-adenylyl)-L-tyrosyl-[protein] + diphosphate. The catalysed reaction is L-histidyl-[protein] + UTP = N(tele)-(5'-uridylyl)-L-histidyl-[protein] + diphosphate. It catalyses the reaction L-seryl-[protein] + UTP = O-(5'-uridylyl)-L-seryl-[protein] + diphosphate. The enzyme catalyses L-tyrosyl-[protein] + UTP = O-(5'-uridylyl)-L-tyrosyl-[protein] + diphosphate. Functionally, nucleotidyltransferase involved in the post-translational modification of proteins. It can catalyze the addition of adenosine monophosphate (AMP) or uridine monophosphate (UMP) to a protein, resulting in modifications known as AMPylation and UMPylation. In Aliivibrio fischeri (strain MJ11) (Vibrio fischeri), this protein is Protein nucleotidyltransferase YdiU.